Here is a 291-residue protein sequence, read N- to C-terminus: ATP synthase gamma chain (291 aa).

It belongs to the ATPase gamma chain family. As to quaternary structure, F-type ATPases have 2 components, CF(1) - the catalytic core - and CF(0) - the membrane proton channel. CF(1) has five subunits: alpha(3), beta(3), gamma(1), delta(1), epsilon(1). CF(0) has three main subunits: a, b and c.

It localises to the cell inner membrane. In terms of biological role, produces ATP from ADP in the presence of a proton gradient across the membrane. The gamma chain is believed to be important in regulating ATPase activity and the flow of protons through the CF(0) complex. The chain is ATP synthase gamma chain from Burkholderia multivorans (strain ATCC 17616 / 249).